The chain runs to 262 residues: Integral membrane protein 2B (262 aa).

The Cytoplasmic portion of the chain corresponds to 1–49 (MVKVSFNSALAHKEAANKEEENSQVLILPPDAKEPEDVVVPAGHKRAWC). The helical; Signal-anchor for type II membrane protein transmembrane segment at 50–70 (WCMCFGLAFMLAGVILGGAYL) threads the bilayer. The Lumenal portion of the chain corresponds to 71 to 262 (YKYFAFQQGG…FAMETLICEQ (192 aa)). The region spanning 132–226 (FADSDPADIV…LCRGKETYKL (95 aa)) is the BRICHOS domain. Disulfide bonds link Cys159/Cys218 and Cys243/Cys260. An N-linked (GlcNAc...) asparagine glycan is attached at Asn165.

The protein belongs to the ITM2 family. Homodimer; disulfide-linked. Expressed in areas of chondro-osteogenic transition and widely in the nervous system.

Its subcellular location is the golgi apparatus membrane. The protein resides in the cell membrane. The protein localises to the endosome membrane. In terms of biological role, plays a role in the induction of neurite outgrowth. The chain is Integral membrane protein 2B (ITM2B) from Gallus gallus (Chicken).